The sequence spans 102 residues: Small ribosomal subunit protein uS10 (102 aa).

This sequence belongs to the universal ribosomal protein uS10 family. Part of the 30S ribosomal subunit.

Its function is as follows. Involved in the binding of tRNA to the ribosomes. The chain is Small ribosomal subunit protein uS10 from Thermotoga maritima (strain ATCC 43589 / DSM 3109 / JCM 10099 / NBRC 100826 / MSB8).